Reading from the N-terminus, the 709-residue chain is Mucin-20 (709 aa).

The first 25 residues, 1-25, serve as a signal peptide directing secretion; the sequence is MGCLWGLALPLFFFCWEVGVSGSSA. The segment covering 57–69 has biased composition (polar residues); the sequence is TQTLSAETSSRAS. Disordered regions lie at residues 57-92 and 170-403; these read TQTLSAETSSRASTPAGPIPEAETRGAKRISPARET and KGLS…WSPG. Basic and acidic residues predominate over residues 78 to 92; sequence AETRGAKRISPARET. Low complexity-rich tracts occupy residues 173–182, 190–199, 209–218, 228–237, 247–256, 266–275, 285–294, 304–313, 323–332, 342–351, 361–370, and 380–389; these read SSESSASSDS and SRASESSASS. 11 consecutive repeat copies span residues 173-192, 193-211, 212-230, 231-249, 250-268, 269-287, 288-306, 307-325, 326-344, 345-363, and 364-382. The tract at residues 173 to 400 is 12 X 20 AA approximate tandem repeats of S-S-E-S-S-A-S-S-D-S-P-H-P-V-I-T-P-S-R-A; it reads SSESSASSDS…GPHPVITPSW (228 aa). A 12; approximate repeat occupies 383-400; that stretch reads SESSASSDGPHPVITPSW. A glycan (N-linked (GlcNAc...) asparagine) is linked at Asn423. Disordered stretches follow at residues 434 to 515 and 583 to 657; these read SSIP…APGA and NFTP…VSAG. Residues 450-656 form an involved in oligomerization region; the sequence is VKASSTSDPP…RTRPTTDVSA (207 aa). The segment covering 474–489 has biased composition (polar residues); sequence VTASAETLSTAGTTES. Over residues 613–652 the composition is skewed to low complexity; sequence TTTNSSRGTNSTLAKITTSAKTTMKPPTATPTTARTRPTT. N-linked (GlcNAc...) asparagine glycosylation is found at Asn616 and Asn622. An interaction with MET region spans residues 657–709; the sequence is GENGGFLLLRLSVASPEDLTDPRVAERLMQQLHRELHAHAPHFQVSLLRVRRG.

As to quaternary structure, interacts with MET; oligomerization increases affinity for MET. In terms of tissue distribution, highly expressed in kidney, moderately in placenta, lung, prostate, liver, and digestive system. In the kidney, localized in the proximal tubules but not in the glomerulus or distal tubules. Detected in most of the male urogenital tract epithelia, with the exception of epididymis.

Its subcellular location is the secreted. It localises to the apical cell membrane. The protein resides in the basolateral cell membrane. The protein localises to the cell projection. It is found in the microvillus membrane. May regulate MET signaling cascade. Seems to decrease hepatocyte growth factor (HGF)-induced transient MAPK activation. Blocks GRB2 recruitment to MET thus suppressing the GRB2-RAS pathway. Inhibits HGF-induced proliferation of MMP1 and MMP9 expression. The polypeptide is Mucin-20 (MUC20) (Homo sapiens (Human)).